We begin with the raw amino-acid sequence, 179 residues long: GTP-dependent dephospho-CoA kinase (179 aa).

Asp-55, Val-57, Asp-74, Lys-76, and Glu-128 together coordinate GTP.

This sequence belongs to the GTP-dependent DPCK family.

It catalyses the reaction 3'-dephospho-CoA + GTP = GDP + CoA + H(+). It functions in the pathway cofactor biosynthesis; coenzyme A biosynthesis. Its function is as follows. Catalyzes the GTP-dependent phosphorylation of the 3'-hydroxyl group of dephosphocoenzyme A to form coenzyme A (CoA). This is GTP-dependent dephospho-CoA kinase from Saccharolobus islandicus (strain M.16.4 / Kamchatka #3) (Sulfolobus islandicus).